A 149-amino-acid chain; its full sequence is Transcriptional repressor NrdR (149 aa).

A zinc finger lies at 3–34 (CPFCAAVDTKVIDSRLVGDGSQVRRRRQCLVC). Residues 49-139 (PRVIKSDEVR…VYRSFEDIRE (91 aa)) form the ATP-cone domain.

This sequence belongs to the NrdR family. The cofactor is Zn(2+).

In terms of biological role, negatively regulates transcription of bacterial ribonucleotide reductase nrd genes and operons by binding to NrdR-boxes. The chain is Transcriptional repressor NrdR from Serratia proteamaculans (strain 568).